The chain runs to 126 residues: Fluoride-specific ion channel FluC 1 (126 aa).

Helical transmembrane passes span 37–57 (HWGT…VLAL), 67–87 (IALL…TFVV), and 98–118 (LLAA…AAAA). Na(+) contacts are provided by glycine 77 and serine 80.

This sequence belongs to the fluoride channel Fluc/FEX (TC 1.A.43) family.

The protein localises to the cell inner membrane. The enzyme catalyses fluoride(in) = fluoride(out). Its activity is regulated as follows. Na(+) is not transported, but it plays an essential structural role and its presence is essential for fluoride channel function. Functionally, fluoride-specific ion channel. Important for reducing fluoride concentration in the cell, thus reducing its toxicity. The chain is Fluoride-specific ion channel FluC 1 from Parasynechococcus marenigrum (strain WH8102).